Reading from the N-terminus, the 216-residue chain is Probable transaldolase (216 aa).

Residue K83 is the Schiff-base intermediate with substrate of the active site.

It belongs to the transaldolase family. Type 3B subfamily.

It is found in the cytoplasm. It carries out the reaction D-sedoheptulose 7-phosphate + D-glyceraldehyde 3-phosphate = D-erythrose 4-phosphate + beta-D-fructose 6-phosphate. Its pathway is carbohydrate degradation; pentose phosphate pathway; D-glyceraldehyde 3-phosphate and beta-D-fructose 6-phosphate from D-ribose 5-phosphate and D-xylulose 5-phosphate (non-oxidative stage): step 2/3. Transaldolase is important for the balance of metabolites in the pentose-phosphate pathway. This is Probable transaldolase from Thermoanaerobacter sp. (strain X514).